The sequence spans 468 residues: Glutamate--tRNA ligase (468 aa).

Positions 12–22 match the 'HIGH' region motif; it reads PSPTGFIHLGN. The 'KMSKS' region motif lies at 244 to 248; the sequence is KMSKR. Lysine 247 is a binding site for ATP.

The protein belongs to the class-I aminoacyl-tRNA synthetase family. Glutamate--tRNA ligase type 1 subfamily. In terms of assembly, monomer.

It is found in the cytoplasm. It catalyses the reaction tRNA(Glu) + L-glutamate + ATP = L-glutamyl-tRNA(Glu) + AMP + diphosphate. Functionally, catalyzes the attachment of glutamate to tRNA(Glu) in a two-step reaction: glutamate is first activated by ATP to form Glu-AMP and then transferred to the acceptor end of tRNA(Glu). This chain is Glutamate--tRNA ligase, found in Polynucleobacter necessarius subsp. necessarius (strain STIR1).